Consider the following 247-residue polypeptide: Small ribosomal subunit protein uS3 (247 aa).

The 73-residue stretch at isoleucine 39 to lysine 111 folds into the KH type-2 domain. The interval glutamate 221–asparagine 247 is disordered. Over residues arginine 236–asparagine 247 the composition is skewed to basic and acidic residues.

The protein belongs to the universal ribosomal protein uS3 family. As to quaternary structure, part of the 30S ribosomal subunit. Forms a tight complex with proteins S10 and S14.

In terms of biological role, binds the lower part of the 30S subunit head. Binds mRNA in the 70S ribosome, positioning it for translation. The protein is Small ribosomal subunit protein uS3 of Metamycoplasma arthritidis (strain 158L3-1) (Mycoplasma arthritidis).